The chain runs to 543 residues: MSQKMDFDAIVIGGGFGGLYAVKKLRDELELKVQAFDKATDVAGTWYWNRYPGALTDTETHLYCYSWDKELLQSLEIKKKYVQGPDVRKYLQQVAEKHDLKKSYQFNTAVQSAHYNEADALWEVTTEYGDKYTARFLITALGLLSAPNLPNIKGINQFKGELHHTSRWPDDVSFEGKRVGVIGTGSTGVQVITAVAPLAKHLTVFQRSAQYSVPIGNDPLSEEDVKKIKDNYDKSLGWCMNSALAFALNESTVPAMSVSAEERKAVFEKAWQTGGGFRFMFETFGDIATNMEANIEAQNFIKGKIAEIVKDPAIAQKLMPQDLYAKRPLCDSGYYNTFNRDNVRLEDVKANPIVEITENGVKLENGDFVELDMLICATGFDAVDGNYVRMDIQGKNGLAMKDYWKEGPSSYMGVTVNNYPNMFMVLGPNGPFTNLPPSIESQVEWISDTIQYTVENNVESIEATKEAEEQWTQTCANIAEMTLFPKAQSWIFGANIPGKKNTVYFYLGGLKEYRTCASNCKNHAYEGFDIQLQRSDIKQPANA.

The FAD site is built by Phe-16, Asp-37, Trp-46, Asp-57, Tyr-63, and Val-110.

The protein belongs to the FAD-binding monooxygenase family. FAD serves as cofactor.

The enzyme catalyses cyclohexanone + NADPH + O2 + H(+) = hexano-6-lactone + NADP(+) + H2O. This chain is Cyclohexanone 1,2-monooxygenase, found in Acinetobacter sp.